The sequence spans 394 residues: Junctional adhesion molecule-like (394 aa).

An N-terminal signal peptide occupies residues 1–19 (MFCPLKLILLPVLLDYSLG). Ig-like V-type domains lie at 20-132 (LNDL…KAVV) and 137-250 (PEEP…IVLH). Over 20-275 (LNDLNVSPPE…RPLVLGGNQL (256 aa)) the chain is Extracellular. Cystine bridges form between Cys-42–Cys-116 and Cys-155–Cys-234. N-linked (GlcNAc...) asparagine glycosylation is found at Asn-76 and Asn-231. The helical transmembrane segment at 276–296 (VIIVGIVCATILLLPVLILIV) threads the bilayer. The Cytoplasmic segment spans residues 297-394 (KKTCGNKSSV…GGMPKTQQAF (98 aa)). Residues 369–394 (PSLRSDRNNSLEKKSGGGMPKTQQAF) are disordered. Over residues 372–383 (RSDRNNSLEKKS) the composition is skewed to basic and acidic residues.

Belongs to the immunoglobulin superfamily. In terms of assembly, homodimer; active form in leukocyte-endothelial cell adhesion. Interacts (homodimeric form) with CXADR. Interacts (via cytoplasmic domain) with the PI3 kinase; upon CXADR-binding. Interacts with ITGA4 and ITGB1; integrin alpha-4/beta-1 may regulate leukocyte to endothelial cells adhesion by controlling JAML homodimerization. Expression is restricted to the hematopoietic tissues with the exception of liver. Expressed in fetal liver, spleen and thymus. Preferentially expressed by mature leukocytes (at protein level).

It is found in the cell membrane. The protein localises to the cell junction. Its function is as follows. Transmembrane protein of the plasma membrane of leukocytes that control their migration and activation through interaction with CXADR, a plasma membrane receptor found on adjacent epithelial and endothelial cells. The interaction between both receptors mediates the activation of gamma-delta T-cells, a subpopulation of T-cells residing in epithelia and involved in tissue homeostasis and repair. Upon epithelial CXADR-binding, JAML induces downstream cell signaling events in gamma-delta T-cells through PI3-kinase and MAP kinases. It results in proliferation and production of cytokines and growth factors by T-cells that in turn stimulate epithelial tissues repair. It also controls the transmigration of leukocytes within epithelial and endothelial tissues through adhesive interactions with epithelial and endothelial CXADR. This Homo sapiens (Human) protein is Junctional adhesion molecule-like.